A 681-amino-acid polypeptide reads, in one-letter code: Angiomotin-like 2b (681 aa).

The span at 68–84 (GGGAASSSQSSSESLSQ) shows a compositional bias: low complexity. A disordered region spans residues 68–106 (GGGAASSSQSSSESLSQDEPHSPQLSTRQEPQGQEHQVD). Polar residues predominate over residues 90-102 (PQLSTRQEPQGQE). Tyr126 carries the post-translational modification Phosphotyrosine; by FGFR1. Coiled coils occupy residues 268–319 (NACS…LMKG), 362–441 (IEKL…LQAT), and 481–508 (VYTLQENLREKEERILSLEADKIRWEQK). The segment at 589–618 (QLGALQPATADSSIISSHSTPAHTAQGKER) is disordered. The segment covering 597–611 (TADSSIISSHSTPAH) has biased composition (polar residues). The short motif at 678–681 (EIFI) is the PDZ-binding element.

Belongs to the angiomotin family. Interacts with SRC. Phosphorylation at Tyr-126 is necessary for efficient binding to SRC and synergistically functioning with SRC to activate the downstream MAPK pathway. As to expression, expressed in endothelial cells.

It localises to the recycling endosome. The protein resides in the cytoplasm. Its subcellular location is the cell projection. The protein localises to the podosome. It is found in the cell junction. Required for proper architecture of actin filaments and for cell movements during embryogenesis. Plays a role in the radial actin fiber architecture in skin epithelial cells, thereby maintains cell geometry, size and cell interconnectivity within the skin. Plays an important role in coupling actin fibers to cell junctions in endothelial cells and is therefore required for correct endothelial cell morphology and maintenance of dorsal aorta lumen expansion during embryogenesis. May further play a role in the polarity, proliferation and migration of endothelial cells, and therefore participates in angiogenesis. May regulate the translocation of phosphorylated SRC to peripheral cell-matrix adhesion sites. The sequence is that of Angiomotin-like 2b from Danio rerio (Zebrafish).